We begin with the raw amino-acid sequence, 239 residues long: Uridylate kinase (239 aa).

Residue 10–13 (KFSG) participates in ATP binding. An involved in allosteric activation by GTP region spans residues 18–23 (GENGFG). Gly-52 lines the UMP pocket. Residues Gly-53 and Arg-57 each contribute to the ATP site. UMP-binding positions include Asp-73 and 134–141 (TGNPYFTT). ATP is bound by residues Thr-161, Tyr-167, and Asp-170.

The protein belongs to the UMP kinase family. As to quaternary structure, homohexamer.

It is found in the cytoplasm. It catalyses the reaction UMP + ATP = UDP + ADP. It functions in the pathway pyrimidine metabolism; CTP biosynthesis via de novo pathway; UDP from UMP (UMPK route): step 1/1. With respect to regulation, allosterically activated by GTP. Inhibited by UTP. Functionally, catalyzes the reversible phosphorylation of UMP to UDP. The chain is Uridylate kinase from Campylobacter jejuni subsp. doylei (strain ATCC BAA-1458 / RM4099 / 269.97).